A 975-amino-acid polypeptide reads, in one-letter code: Exocyst complex component 4 (975 aa).

N-acetylalanine is present on Ala-2. Lys-9 bears the N6-acetyllysine mark. Ser-32 is modified (phosphoserine). The stretch at 32–114 (STSDDVEDRE…HCKRDELRKL (83 aa)) forms a coiled coil. Over residues 211 to 224 (RNKEKGKMSSHGKD) the composition is skewed to basic and acidic residues. A disordered region spans residues 211–230 (RNKEKGKMSSHGKDPSPGPL). Position 226 is a phosphoserine (Ser-226). Thr-238 is subject to Phosphothreonine. Ser-469 is modified (phosphoserine).

This sequence belongs to the SEC8 family. As to quaternary structure, the exocyst complex is composed of EXOC1, EXOC2, EXOC3, EXOC4, EXOC5, EXOC6, EXOC7 and EXOC8. Interacts with BIRC6/bruce. Interacts with MYRIP. Interacts with SH3BP1; required for the localization of both SH3BP1 and the exocyst to the leading edge of migrating cells. Interacts with SLC6A9. Expressed in the striatum (at protein level).

It is found in the midbody. It localises to the midbody ring. Its subcellular location is the cell projection. The protein localises to the cytoplasm. The protein resides in the cytoskeleton. It is found in the microtubule organizing center. It localises to the centrosome. In terms of biological role, component of the exocyst complex involved in the docking of exocytic vesicles with fusion sites on the plasma membrane. The chain is Exocyst complex component 4 (Exoc4) from Mus musculus (Mouse).